Here is a 106-residue protein sequence, read N- to C-terminus: Large ribosomal subunit protein eL34 (106 aa).

Belongs to the eukaryotic ribosomal protein eL34 family.

This Hyperthermus butylicus (strain DSM 5456 / JCM 9403 / PLM1-5) protein is Large ribosomal subunit protein eL34.